The sequence spans 259 residues: 3-dehydroquinate dehydratase (259 aa).

Residues glutamate 50–arginine 52 and arginine 86 contribute to the 3-dehydroquinate site. Histidine 147 serves as the catalytic Proton donor/acceptor. Lysine 174 functions as the Schiff-base intermediate with substrate in the catalytic mechanism. The 3-dehydroquinate site is built by arginine 216, serine 235, and glutamine 239.

Belongs to the type-I 3-dehydroquinase family. As to quaternary structure, homodimer.

It catalyses the reaction 3-dehydroquinate = 3-dehydroshikimate + H2O. It participates in metabolic intermediate biosynthesis; chorismate biosynthesis; chorismate from D-erythrose 4-phosphate and phosphoenolpyruvate: step 3/7. Its function is as follows. Involved in the third step of the chorismate pathway, which leads to the biosynthesis of aromatic amino acids. Catalyzes the cis-dehydration of 3-dehydroquinate (DHQ) and introduces the first double bond of the aromatic ring to yield 3-dehydroshikimate. This Geobacillus sp. (strain WCH70) protein is 3-dehydroquinate dehydratase.